We begin with the raw amino-acid sequence, 84 residues long: Beta-defensin 119 (84 aa).

The signal sequence occupies residues 1–21; that stretch reads MKFLFLFLAILLATKIPVISG. Cystine bridges form between cysteine 28–cysteine 55, cysteine 35–cysteine 49, and cysteine 39–cysteine 56.

The protein belongs to the beta-defensin family.

The protein localises to the secreted. Has antibacterial activity. The sequence is that of Beta-defensin 119 (DEFB119) from Macaca fascicularis (Crab-eating macaque).